A 197-amino-acid chain; its full sequence is Small ribosomal subunit protein uS4 (197 aa).

The 61-residue stretch at 87–147 (SRIDNVIFRL…ESKKNTQRMK (61 aa)) folds into the S4 RNA-binding domain.

Belongs to the universal ribosomal protein uS4 family. Part of the 30S ribosomal subunit. Contacts protein S5. The interaction surface between S4 and S5 is involved in control of translational fidelity.

Functionally, one of the primary rRNA binding proteins, it binds directly to 16S rRNA where it nucleates assembly of the body of the 30S subunit. Its function is as follows. With S5 and S12 plays an important role in translational accuracy. This chain is Small ribosomal subunit protein uS4, found in Agathobacter rectalis (strain ATCC 33656 / DSM 3377 / JCM 17463 / KCTC 5835 / VPI 0990) (Eubacterium rectale).